The sequence spans 129 residues: MESKVEQGVKNLNMENDHQEKEEKEEKPQDASKRDPIVALPFEAGDYYVPRGGRRRFRVRQPIVHYRWDLMHRVGEPQGRMREENVQRFGDDVRQLMEKLRERQLSHSLRAVSTDPPHHDHHDEFCLMP.

The disordered stretch occupies residues Met1–Ile37. Positions Glu15–Pro36 are enriched in basic and acidic residues. The residue at position 51 (Arg51) is an Omega-N-methylarginine. A his cluster region spans residues His118–His122. Residue Cys126 participates in Zn(2+) binding.

This sequence belongs to the BEX family. As to quaternary structure, interacts with LMO2, possibly leading to regulate the transcriptional activity of a DNA-binding complex containing LMO2. Interacts with OMP. Primarily localized to neuronal cells within several regions of the brain, including the olfactory epithelium, bulb, peri/paraventricular nuclei, suprachiasmatic nucleus, arcuate nucleus, median eminence, lateral hypothalamic area, thalamus, hippocampus and cerebellum (at protein level).

The protein localises to the cytoplasm. It is found in the nucleus. Its function is as follows. Regulator of mitochondrial apoptosis and G1 cell cycle. Regulates the level of PP2A regulatory subunit B and PP2A phosphatase activity. In absence of reductive stress, acts as a pseudosubstrate for the CRL2(FEM1B) complex: associates with FEM1B via zinc, thereby preventing association between FEM1B and its substrates. This Mus musculus (Mouse) protein is Protein BEX2.